A 168-amino-acid chain; its full sequence is Shikimate kinase (168 aa).

Position 11–16 (11–16 (GAGKTT)) interacts with ATP. Position 15 (Thr15) interacts with Mg(2+). Positions 33, 57, and 78 each coordinate substrate. Residue Arg118 coordinates ATP. Arg136 is a binding site for substrate. Arg153 contacts ATP.

It belongs to the shikimate kinase family. As to quaternary structure, monomer. Requires Mg(2+) as cofactor.

The protein localises to the cytoplasm. It catalyses the reaction shikimate + ATP = 3-phosphoshikimate + ADP + H(+). It functions in the pathway metabolic intermediate biosynthesis; chorismate biosynthesis; chorismate from D-erythrose 4-phosphate and phosphoenolpyruvate: step 5/7. Its function is as follows. Catalyzes the specific phosphorylation of the 3-hydroxyl group of shikimic acid using ATP as a cosubstrate. This chain is Shikimate kinase, found in Enterococcus faecalis (strain ATCC 700802 / V583).